Reading from the N-terminus, the 87-residue chain is UPF0386 protein RSKD131_0371 (87 aa).

The protein belongs to the UPF0386 family.

The chain is UPF0386 protein RSKD131_0371 from Cereibacter sphaeroides (strain KD131 / KCTC 12085) (Rhodobacter sphaeroides).